A 223-amino-acid chain; its full sequence is F420-dependent NADP reductase (223 aa).

NADP(+) contacts are provided by residues 9 to 12, 30 to 31, Lys35, Leu75, and Val101; these read TGDQ and SR.

The protein belongs to the F420-dependent NADP reductase family.

The catalysed reaction is reduced coenzyme F420-(gamma-L-Glu)(n) + NADP(+) = oxidized coenzyme F420-(gamma-L-Glu)(n) + NADPH + 2 H(+). Functionally, catalyzes the reduction of NADP(+) with F420H(2) via hydride transfer, and the reverse reaction, i.e. the reduction of F420 with NADPH. Probably functions in the regeneration of NADPH required in biosynthetic reactions. The polypeptide is F420-dependent NADP reductase (fno) (Methanocaldococcus jannaschii (strain ATCC 43067 / DSM 2661 / JAL-1 / JCM 10045 / NBRC 100440) (Methanococcus jannaschii)).